The sequence spans 171 residues: uncharacterized protein (171 aa).

The tract at residues 123 to 171 (CTKRDLRNDPPPAYQPDDPLKDLRKNFEKKEKPTWNDVEKKKNGVFEFH) is disordered. A compositionally biased stretch (basic and acidic residues) spans 140-171 (DPLKDLRKNFEKKEKPTWNDVEKKKNGVFEFH).

This is an uncharacterized protein from Caenorhabditis elegans.